Reading from the N-terminus, the 121-residue chain is Large ribosomal subunit protein eL34B (121 aa).

It belongs to the eukaryotic ribosomal protein eL34 family. Component of the large ribosomal subunit (LSU). Mature yeast ribosomes consist of a small (40S) and a large (60S) subunit. The 40S small subunit contains 1 molecule of ribosomal RNA (18S rRNA) and 33 different proteins (encoded by 57 genes). The large 60S subunit contains 3 rRNA molecules (25S, 5.8S and 5S rRNA) and 46 different proteins (encoded by 81 genes).

Its subcellular location is the cytoplasm. In terms of biological role, component of the ribosome, a large ribonucleoprotein complex responsible for the synthesis of proteins in the cell. The small ribosomal subunit (SSU) binds messenger RNAs (mRNAs) and translates the encoded message by selecting cognate aminoacyl-transfer RNA (tRNA) molecules. The large subunit (LSU) contains the ribosomal catalytic site termed the peptidyl transferase center (PTC), which catalyzes the formation of peptide bonds, thereby polymerizing the amino acids delivered by tRNAs into a polypeptide chain. The nascent polypeptides leave the ribosome through a tunnel in the LSU and interact with protein factors that function in enzymatic processing, targeting, and the membrane insertion of nascent chains at the exit of the ribosomal tunnel. This chain is Large ribosomal subunit protein eL34B, found in Saccharomyces cerevisiae (strain ATCC 204508 / S288c) (Baker's yeast).